A 491-amino-acid chain; its full sequence is UDP-N-acetylmuramate--L-alanine ligase (491 aa).

126–132 (GTHGKTT) is a binding site for ATP.

It belongs to the MurCDEF family.

It localises to the cytoplasm. The enzyme catalyses UDP-N-acetyl-alpha-D-muramate + L-alanine + ATP = UDP-N-acetyl-alpha-D-muramoyl-L-alanine + ADP + phosphate + H(+). Its pathway is cell wall biogenesis; peptidoglycan biosynthesis. Its function is as follows. Cell wall formation. The chain is UDP-N-acetylmuramate--L-alanine ligase from Salmonella choleraesuis (strain SC-B67).